A 311-amino-acid chain; its full sequence is tRNA dimethylallyltransferase (311 aa).

Position 10-17 (10-17 (GPTASGKT)) interacts with ATP. 12-17 (TASGKT) lines the substrate pocket. Interaction with substrate tRNA regions lie at residues 35–38 (DSAL), 159–163 (QRINR), and 240–245 (RCVGYR).

It belongs to the IPP transferase family. As to quaternary structure, monomer. Mg(2+) serves as cofactor.

It catalyses the reaction adenosine(37) in tRNA + dimethylallyl diphosphate = N(6)-dimethylallyladenosine(37) in tRNA + diphosphate. Functionally, catalyzes the transfer of a dimethylallyl group onto the adenine at position 37 in tRNAs that read codons beginning with uridine, leading to the formation of N6-(dimethylallyl)adenosine (i(6)A). The polypeptide is tRNA dimethylallyltransferase (Haemophilus influenzae (strain PittEE)).